The following is a 216-amino-acid chain: Endo-1,4-beta-xylanase 1 (216 aa).

A signal peptide spans 1–19 (MFLTSVVSLVVGAISCVSA). The GH11 domain maps to 29-216 (QMTPRNSCYG…SSGSASITVS (188 aa)). Residue Glu-112 is the Nucleophile of the active site. Residue Glu-203 is the Proton donor of the active site.

The protein belongs to the glycosyl hydrolase 11 (cellulase G) family.

It localises to the secreted. The enzyme catalyses Endohydrolysis of (1-&gt;4)-beta-D-xylosidic linkages in xylans.. It functions in the pathway glycan degradation; xylan degradation. Its function is as follows. Endo-1,4-beta-xylanase involved in the hydrolysis of xylan, a major structural heterogeneous polysaccharide found in plant biomass representing the second most abundant polysaccharide in the biosphere, after cellulose. The protein is Endo-1,4-beta-xylanase 1 (xyl1) of Claviceps purpurea (Ergot fungus).